Consider the following 189-residue polypeptide: Protein CURLY FLAG LEAF 1 (189 aa).

The EAR signature appears at 50–55 (TLELNS). Residues 57-91 (LSLPCHWEQCLDLKTGEIYYINWKNGMRVKEDPRK) enclose the WW domain. Residues 90-148 (RKVMNADPDSGDSYGTVCSEEDSSYYDSEESSSESSPSSRENHKEEEEEEEEEEEEEED) are disordered. Composition is skewed to acidic residues over residues 108–121 (SEED…EESS) and 135–148 (EEEE…EEED).

In terms of assembly, interacts with BHLH122/CFLAP1 and BHLH80/CFLAP2. Binds to HDG1. Mostly observed in roots, flowers and siliques. Expressed in cells differentiated from epidermal cells such as trichomes, stigmatic papillar cells and guard cells, as well as in tissues undergoing abscission and dehiscence.

Functionally, negatively regulates the cuticle development by interacting with the HD-ZIP IV transcription factor HDG1. The sequence is that of Protein CURLY FLAG LEAF 1 from Arabidopsis thaliana (Mouse-ear cress).